A 570-amino-acid polypeptide reads, in one-letter code: Formate--tetrahydrofolate ligase (570 aa).

T65–T72 serves as a coordination point for ATP.

This sequence belongs to the formate--tetrahydrofolate ligase family.

It catalyses the reaction (6S)-5,6,7,8-tetrahydrofolate + formate + ATP = (6R)-10-formyltetrahydrofolate + ADP + phosphate. It functions in the pathway one-carbon metabolism; tetrahydrofolate interconversion. In Herpetosiphon aurantiacus (strain ATCC 23779 / DSM 785 / 114-95), this protein is Formate--tetrahydrofolate ligase.